Consider the following 930-residue polypeptide: MKIPLHKLLISSTLVTPILLSIATYGADASLSPTDSFDGAGGSTFTPKSTADANGTNYVLSGNVYINDAGKGTALTGCCFTETTGDLTFTGKGYSFSFNTVDAGSNAGAAASTTADKALTFTGFSNLSFIAAPGTTVASGKSTLSSAGALNLTDNGTILFSQNVSNEANNNGGAITTKTLSISGNTSSITFTSNSAKKLGGAIYSSAAASISGNTGQLVFMNNKGETGGGALGFEASSSITQNSSLFFSGNTATDAAGKGGAIYCEKTGETPTLTISGNKSLTFAENSSVTQGGAICAHGLDLSAAGPTLFSNNRCGNTAAGKGGAIAIADSGSLSLSANQGDITFLGNTLTSTSAPTSTRNAIYLGSSAKITNLRAAQGQSIYFYDPIASNTTGASDVLTINQPDSNSPLDYSGTIVFSGEKLSADEAKAADNFTSILKQPLALASGTLALKGNVELDVNGFTQTEGSTLLMQPGTKLKADTEAISLTKLVVDLSALEGNKSVSIETAGANKTITLTSPLVFQDSSGNFYESHTINQAFTQPLVVFTAATAASDIYIDALLTSPVQTPEPHYGYQGHWEATWADTSTAKSGTMTWVTTGYNPNPERRASVVPDSLWASFTDIRTLQQIMTSQANSIYQQRGLWASGTANFFHKDKSGTNQAFRHKSYGYIVGGSAEDFSENIFSVAFCQLFGKDKDLFIVENTSHNYLASLYLQHRAFLGGLPMPSFGSITDMLKDIPLILNAQLSYSYTKNDMDTRYTSYPEAQGSWTNNSGALELGGSLALYLPKEAPFFQGYFPFLKFQAVYSRQQNFKESGAEARAFDDGDLVNCSIPVGIRLEKISEDEKNNFEISLAYIGDVYRKNPRSRTSLMVSGASWTSLCKNLARQAFLASAGSHLTLSPHVELSGEAAYELRGSAHIYNVDCGLRYSF.

Positions 1–26 (MKIPLHKLLISSTLVTPILLSIATYG) are cleaved as a signal peptide. In terms of domain architecture, Autotransporter spans 636 to 930 (SIYQQRGLWA…NVDCGLRYSF (295 aa)).

This sequence belongs to the PMP outer membrane protein family.

The protein localises to the secreted. Its subcellular location is the cell wall. It localises to the cell outer membrane. The protein is Probable outer membrane protein pmp8 (pmp8) of Chlamydia pneumoniae (Chlamydophila pneumoniae).